A 156-amino-acid polypeptide reads, in one-letter code: 6,7-dimethyl-8-ribityllumazine synthase (156 aa).

Residues Phe22, 57–59, and 81–83 contribute to the 5-amino-6-(D-ribitylamino)uracil site; these read AVE and SVI. Residue 86–87 participates in (2S)-2-hydroxy-3-oxobutyl phosphate binding; it reads GT. The Proton donor role is filled by His89. Phe114 serves as a coordination point for 5-amino-6-(D-ribitylamino)uracil. Arg128 contacts (2S)-2-hydroxy-3-oxobutyl phosphate.

It belongs to the DMRL synthase family. As to quaternary structure, forms an icosahedral capsid composed of 60 subunits, arranged as a dodecamer of pentamers.

It carries out the reaction (2S)-2-hydroxy-3-oxobutyl phosphate + 5-amino-6-(D-ribitylamino)uracil = 6,7-dimethyl-8-(1-D-ribityl)lumazine + phosphate + 2 H2O + H(+). It participates in cofactor biosynthesis; riboflavin biosynthesis; riboflavin from 2-hydroxy-3-oxobutyl phosphate and 5-amino-6-(D-ribitylamino)uracil: step 1/2. In terms of biological role, catalyzes the formation of 6,7-dimethyl-8-ribityllumazine by condensation of 5-amino-6-(D-ribitylamino)uracil with 3,4-dihydroxy-2-butanone 4-phosphate. This is the penultimate step in the biosynthesis of riboflavin. The chain is 6,7-dimethyl-8-ribityllumazine synthase from Aliivibrio fischeri (strain ATCC 700601 / ES114) (Vibrio fischeri).